The following is a 498-amino-acid chain: Hexokinase-3 (498 aa).

Residues 4 to 24 traverse the membrane as a helical segment; the sequence is VAVAFAAVAVVAACSVAAVMV. The Hexokinase domain maps to 35 to 494; that stretch reads RTVVEILKEL…SSIGSALLVA (460 aa). The interval 90 to 227 is hexokinase small subdomain; it reads TGREKGTYYA…GLDMHVAALV (138 aa). ADP contacts are provided by Gly104 and Thr105. Thr193, Lys194, Asn228, and Asp229 together coordinate D-glucose. Residues 228–483 are hexokinase large subdomain; that stretch reads NDTVGALSLG…QYVVVKAMED (256 aa). Thr252 contributes to the ADP binding site. Asn255, Glu283, and Glu314 together coordinate D-glucose. Residue Gly448 coordinates ADP.

It belongs to the hexokinase family. As to expression, expressed in roots, emerging lateral roots, vascular tissues of cotyledons, roots and leaves, root and shoot meristems, anther filaments and funiculi of mature seeds.

The protein localises to the mitochondrion outer membrane. The enzyme catalyses a D-hexose + ATP = a D-hexose 6-phosphate + ADP + H(+). It carries out the reaction D-fructose + ATP = D-fructose 6-phosphate + ADP + H(+). The catalysed reaction is D-glucose + ATP = D-glucose 6-phosphate + ADP + H(+). The protein operates within carbohydrate metabolism; hexose metabolism. It participates in carbohydrate degradation; glycolysis; D-glyceraldehyde 3-phosphate and glycerone phosphate from D-glucose: step 1/4. Fructose and glucose phosphorylating enzyme. May be involved in the phosphorylation of glucose during the export from mitochondrion to cytosol. Plays a role in plant growth and development, perhaps by mediating cross-talk between glucose and hormone response pathways. Involved in root hair cell development by mediating certain aspects of cross talk between glucose and ethylene response pathways. The sequence is that of Hexokinase-3 from Arabidopsis thaliana (Mouse-ear cress).